Here is a 264-residue protein sequence, read N- to C-terminus: 5'-nucleotidase SurE (264 aa).

A divalent metal cation is bound by residues aspartate 10, aspartate 11, serine 43, and asparagine 99.

This sequence belongs to the SurE nucleotidase family. The cofactor is a divalent metal cation.

It localises to the cytoplasm. The enzyme catalyses a ribonucleoside 5'-phosphate + H2O = a ribonucleoside + phosphate. Nucleotidase that shows phosphatase activity on nucleoside 5'-monophosphates. In Methanococcus maripaludis (strain C7 / ATCC BAA-1331), this protein is 5'-nucleotidase SurE.